A 520-amino-acid chain; its full sequence is Cyclic AMP-responsive element-binding protein 3-like protein 2 (520 aa).

Over 1–379 (MEVLESGEQG…KLAGTQTGTC (379 aa)) the chain is Cytoplasmic. Ser93 is modified (phosphoserine). A Glycyl lysine isopeptide (Lys-Gly) (interchain with G-Cter in SUMO2) cross-link involves residue Lys178. The residue at position 191 (Ser191) is a Phosphoserine. Positions 195–264 (APVDHLHLPP…PHKLQGSGPL (70 aa)) are disordered. Composition is skewed to low complexity over residues 208–220 (SSHGSDSEGSLSP) and 234–255 (SPSRAAPRAPSALSSSPLLTAP). The region spanning 294 to 357 (ALKKIRRKIK…RTLLQQLQKL (64 aa)) is the bZIP domain. The tract at residues 296–325 (KKIRRKIKNKISAQESRRKKKEYMDSLEKK) is basic motif. Residues 336-357 (LRKKVEVLENTNRTLLQQLQKL) are leucine-zipper. Residues 380–400 (LMVVVLCFAVAFGSFFQGYGP) traverse the membrane as a helical; Signal-anchor for type II membrane protein segment. Residues 401-520 (YPSATKMALP…ELDRRVNTTF (120 aa)) lie on the Lumenal side of the membrane. Residues 427-430 (RNLL) carry the S1P recognition motif. Asn480, Asn504, and Asn517 each carry an N-linked (GlcNAc...) asparagine glycan.

Belongs to the bZIP family. ATF subfamily. As to quaternary structure, binds DNA as a dimer. Upon ER stress, translocated to the Golgi apparatus, where it is processed by regulated intramembrane proteolysis (RIP) to release the cytosol-facing N-terminal transcription factor domain. The cleavage is performed sequentially by site-1 and site-2 proteases (S1P/MBTPS1 and S2P/MBTPS2). Post-translationally, N-glycosylated. In terms of processing, ubiquitinated by HRD1/SYVN1; undergoes 'Lys-48'-linked ubiquitination, followed by rapid proteasomal degradation under normal conditions. Upon ER stress, SYVN1 E3 ubiquitin-protein ligase dissociates from its substrate, ubiquitination does not occur and CREB3L2 is stabilized. As to expression, widely expressed with highest levels in placenta, lung, spleen and intestine, and lowest levels in heart, brain, skeletal muscle, thymus, colon and leukocytes. In fetal tissues, the weakest expression is detected in brain and heart.

Its subcellular location is the endoplasmic reticulum membrane. It is found in the nucleus. Transcription factor involved in unfolded protein response (UPR). In the absence of endoplasmic reticulum (ER) stress, inserted into ER membranes, with N-terminal DNA-binding and transcription activation domains oriented toward the cytosolic face of the membrane. In response to ER stress, transported to the Golgi, where it is cleaved in a site-specific manner by resident proteases S1P/MBTPS1 and S2P/MBTPS2. The released N-terminal cytosolic domain is translocated to the nucleus to effect transcription of specific target genes. Plays a critical role in chondrogenesis by activating the transcription of SEC23A, which promotes the transport and secretion of cartilage matrix proteins, and possibly that of ER biogenesis-related genes. In a neuroblastoma cell line, protects cells from ER stress-induced death. In vitro activates transcription of target genes via direct binding to the CRE site. The chain is Cyclic AMP-responsive element-binding protein 3-like protein 2 (CREB3L2) from Homo sapiens (Human).